The following is a 333-amino-acid chain: Probable G-protein coupled receptor 33 (333 aa).

At 1-30 (MDLINSTDYLINASTLVRNSTQFLAPASKM) the chain is on the extracellular side. N-linked (GlcNAc...) asparagine glycans are attached at residues Asn-5, Asn-12, and Asn-19. A helical transmembrane segment spans residues 31 to 53 (IIALSLYISSIIGTITNGLYLWV). The Cytoplasmic segment spans residues 54–64 (LRFKMKQTVNT). A helical transmembrane segment spans residues 65–86 (LLFFHLILSYFISTMILPFMAT). Over 87-103 (SQLQDNHWNFGTALCKV) the chain is Extracellular. An intrachain disulfide couples Cys-101 to Cys-179. The chain crosses the membrane as a helical span at residues 104–124 (FNGTLSLGMFTSVFFLSAIGL). Residues 125–143 (DRYLLTLHPVWSQQHRTPR) lie on the Cytoplasmic side of the membrane. Residues 144 to 165 (WASSIVLGVWISAAALSIPYLI) traverse the membrane as a helical segment. Residues 166 to 209 (FRQTHHDRKGKVTCQNNYAVSTNWESKEMQALRQWIHVACFISR) lie on the Extracellular side of the membrane. Residues 210–230 (FLLGFLLPFFIIIFCYERVAS) traverse the membrane as a helical segment. At 231–246 (KVKERSLFKSSKPFKV) the chain is on the cytoplasmic side. The chain crosses the membrane as a helical span at residues 247–268 (MMTAIISFFVCWMPYHIHQGLL). Residues 269–283 (LTTNQSLLLELTLIL) lie on the Extracellular side of the membrane. Residue Asn-272 is glycosylated (N-linked (GlcNAc...) asparagine). The helical transmembrane segment at 284-303 (TVLTTSFNTIFSPTLYLFVG) threads the bilayer. Residues 304–333 (ENFKKVFKKSILALFESTFSEDSSVERTQT) lie on the Cytoplasmic side of the membrane.

The protein belongs to the G-protein coupled receptor 1 family.

Its subcellular location is the cell membrane. In terms of biological role, orphan receptor; could be a chemoattractant receptor. This Pan troglodytes (Chimpanzee) protein is Probable G-protein coupled receptor 33 (GPR33).